A 325-amino-acid chain; its full sequence is D-alanine--D-alanine ligase (325 aa).

In terms of domain architecture, ATP-grasp spans 109–309; that stretch reads KRVCKERMLP…FCTLLDQLIE (201 aa). 136 to 191 contributes to the ATP binding site; that stretch reads CRRLPFPMFVKPANLGSSVGISKAHDEQELEAAFSLAKQYDRKIIVERGIEGRELE. Mg(2+) is bound by residues D262, E276, and N278.

The protein belongs to the D-alanine--D-alanine ligase family. Requires Mg(2+) as cofactor. It depends on Mn(2+) as a cofactor.

The protein localises to the cytoplasm. It catalyses the reaction 2 D-alanine + ATP = D-alanyl-D-alanine + ADP + phosphate + H(+). Its pathway is cell wall biogenesis; peptidoglycan biosynthesis. Its function is as follows. Cell wall formation. The chain is D-alanine--D-alanine ligase from Solibacter usitatus (strain Ellin6076).